Consider the following 436-residue polypeptide: GTPase Der (436 aa).

EngA-type G domains are found at residues 4–167 (PVVA…KNIP) and 176–351 (VQFC…ENHS). Residues 10–17 (GRPNVGKS), 57–61 (DTGGI), 119–122 (NKVD), 182–189 (GRPNVGKS), 229–233 (DTAGM), and 294–297 (NKWD) contribute to the GTP site. The KH-like domain maps to 352–436 (MRVQTNILND…PIRIFARARK (85 aa)).

Belongs to the TRAFAC class TrmE-Era-EngA-EngB-Septin-like GTPase superfamily. EngA (Der) GTPase family. Associates with the 50S ribosomal subunit.

GTPase that plays an essential role in the late steps of ribosome biogenesis. The sequence is that of GTPase Der from Bacillus licheniformis (strain ATCC 14580 / DSM 13 / JCM 2505 / CCUG 7422 / NBRC 12200 / NCIMB 9375 / NCTC 10341 / NRRL NRS-1264 / Gibson 46).